The sequence spans 1394 residues: DNA-directed RNA polymerase subunit beta'' (1394 aa).

Zn(2+) is bound by residues Cys224, Cys295, Cys302, and Cys305.

Belongs to the RNA polymerase beta' chain family. RpoC2 subfamily. In plastids the minimal PEP RNA polymerase catalytic core is composed of four subunits: alpha, beta, beta', and beta''. When a (nuclear-encoded) sigma factor is associated with the core the holoenzyme is formed, which can initiate transcription. Requires Zn(2+) as cofactor.

The protein localises to the plastid. It is found in the chloroplast. It carries out the reaction RNA(n) + a ribonucleoside 5'-triphosphate = RNA(n+1) + diphosphate. Functionally, DNA-dependent RNA polymerase catalyzes the transcription of DNA into RNA using the four ribonucleoside triphosphates as substrates. The sequence is that of DNA-directed RNA polymerase subunit beta'' from Cucumis sativus (Cucumber).